The primary structure comprises 179 residues: ATP-dependent protease subunit HslV (179 aa).

Thr-7 is a catalytic residue. Residues Gly-162, Cys-165, and Thr-168 each coordinate Na(+).

It belongs to the peptidase T1B family. HslV subfamily. In terms of assembly, a double ring-shaped homohexamer of HslV is capped on each side by a ring-shaped HslU homohexamer. The assembly of the HslU/HslV complex is dependent on binding of ATP.

Its subcellular location is the cytoplasm. It catalyses the reaction ATP-dependent cleavage of peptide bonds with broad specificity.. With respect to regulation, allosterically activated by HslU binding. Functionally, protease subunit of a proteasome-like degradation complex believed to be a general protein degrading machinery. The protein is ATP-dependent protease subunit HslV of Saccharophagus degradans (strain 2-40 / ATCC 43961 / DSM 17024).